Consider the following 988-residue polypeptide: MAMDFIRIRGARTHNLKNIDLDLPRDKLIVITGLSGSGKSSLAFDTIYAEGQRRYVESLSAYARQFLSVMEKPDLDHIEGLSPAISIEQKSTSHNPRSTVGTITEIYDYLRLLYARVGQPRCPDHGFPLEAQTVSQMVDHMLTLDPEQRYMLLAPVIRDRKGEHAQVFEQLRAQGFVRVRVDGELYEIDAVPPLALRQKHTIEAVIDRFRPREDIKQRLAESFETALKLGEGMVAVQSLDDATAAPHLFSSKYSCPVCDYSLPELEPRLFSFNAPVGACPSCDGLGVAEFFDPDRVVVHPELSLSAGAVRGWDRRNAYYFQLIASLAKHYKFDVDAVWNTLPAKVRQAVLFGSGDEVISFTYFTDAGGRTTRKHRFEGILPNLERRYRETESPAVREELTKYVSQQPCPACNGTRLNRAARNVFVADRPLPELVVLPVNEALNFFRGLSLPGWRGEIASKIVKEIGERLGFLVDVGLDYLTLERKADTLSGGEAQRIRLASQIGAGLVGVMYVLDEPSIGLHQRDNERLLGTLTRLRDLGNTVIVVEHDEDAIRLADHVLDIGPGAGVHGGEICAQGTLQDILESPRSLTGQYLSGKRRIEIPKQRHKPNPKMMLHLRGATGNNLKNVDLEIPAGLLTCITGVSGSGKSTLINDTLFTLAANEINGASHTVAPHREVENLDLFDKVVDIDQSPIGRTPRSNPATYTGMFTPLRELFAQVPESRARGYSPGRFSFNVRGGRCEACQGDGMIKVEMHFLPDVYVPCDVCHGKRYNRETLEIRYKGFNISDVLQMTVEDALRLFEPVPSIARKLETLVDVGLSYIKLGQSATTLSGGEAQRVKLSKELSRRDTGRTLYILDEPTTGLHFHDIEALLGVLHKLRDEGNTVVVIEHNLDVIKTADWIVDLGPEGGHRGGTILVSGTPEDVAAHKASYTGQFLAKMLPSVKARETRPAAMANKPDARPPRKVKPEKVAKATKTATKKTAKKKAS.

33 to 40 contacts ATP; it reads GLSGSGKS. The segment at 255 to 282 adopts a C4-type zinc-finger fold; sequence CPVCDYSLPELEPRLFSFNAPVGACPSC. ABC transporter domains are found at residues 312–589 and 609–938; these read WDRR…PRSL and PNPK…QFLA. ATP is bound at residue 642 to 649; it reads GVSGSGKS. A C4-type zinc finger spans residues 741–767; that stretch reads CEACQGDGMIKVEMHFLPDVYVPCDVC. The interval 948–988 is disordered; it reads ETRPAAMANKPDARPPRKVKPEKVAKATKTATKKTAKKKAS. Positions 958 to 972 are enriched in basic and acidic residues; the sequence is PDARPPRKVKPEKVA. Residues 978-988 show a composition bias toward basic residues; it reads ATKKTAKKKAS.

It belongs to the ABC transporter superfamily. UvrA family. Forms a heterotetramer with UvrB during the search for lesions.

The protein localises to the cytoplasm. In terms of biological role, the UvrABC repair system catalyzes the recognition and processing of DNA lesions. UvrA is an ATPase and a DNA-binding protein. A damage recognition complex composed of 2 UvrA and 2 UvrB subunits scans DNA for abnormalities. When the presence of a lesion has been verified by UvrB, the UvrA molecules dissociate. The polypeptide is UvrABC system protein A (Xanthomonas campestris pv. campestris (strain ATCC 33913 / DSM 3586 / NCPPB 528 / LMG 568 / P 25)).